The following is a 267-amino-acid chain: 3-methyl-2-oxobutanoate hydroxymethyltransferase (267 aa).

Positions 45 and 84 each coordinate Mg(2+). 3-methyl-2-oxobutanoate contacts are provided by residues 45–46 (DS), Asp-84, and Lys-113. Glu-115 provides a ligand contact to Mg(2+). The Proton acceptor role is filled by Glu-182.

Belongs to the PanB family. As to quaternary structure, homodecamer; pentamer of dimers. Mg(2+) is required as a cofactor.

It is found in the cytoplasm. It catalyses the reaction 3-methyl-2-oxobutanoate + (6R)-5,10-methylene-5,6,7,8-tetrahydrofolate + H2O = 2-dehydropantoate + (6S)-5,6,7,8-tetrahydrofolate. The protein operates within cofactor biosynthesis; coenzyme A biosynthesis. In terms of biological role, catalyzes the reversible reaction in which hydroxymethyl group from 5,10-methylenetetrahydrofolate is transferred onto alpha-ketoisovalerate to form ketopantoate. The polypeptide is 3-methyl-2-oxobutanoate hydroxymethyltransferase (Sulfurisphaera tokodaii (strain DSM 16993 / JCM 10545 / NBRC 100140 / 7) (Sulfolobus tokodaii)).